Here is a 635-residue protein sequence, read N- to C-terminus: Cationic amino acid transporter 4 (635 aa).

3 helical membrane-spanning segments follow: residues 42 to 62 (LTLL…TGAV), 66 to 86 (VAGP…LLAA), and 113 to 133 (LWAF…GAAV). 2 N-linked (GlcNAc...) asparagine glycosylation sites follow: N151 and N195. Residues 197–217 (TFSAISLLVILFIVILGFILA) form a helical membrane-spanning segment. N-linked (GlcNAc...) asparagine glycosylation occurs at N221. 5 helical membrane-spanning segments follow: residues 229-249 (FAPF…YAFV), 270-290 (LAIA…STVL), 318-338 (GFIV…SLLF), 365-385 (QVPV…ALLL), and 391-411 (VQFL…SIIV). Phosphoserine is present on residues S422 and S427. The helical transmembrane segment at 478–498 (VTWALGVMLASAITIGCVLVF) threads the bilayer. N-linked (GlcNAc...) asparagine glycosylation is present at N500. Transmembrane regions (helical) follow at residues 508–528 (WGYI…LLVL), 539–559 (LFQI…NICL), and 567–587 (TWVR…GYGI). N601 carries an N-linked (GlcNAc...) asparagine glycan.

Belongs to the amino acid-polyamine-organocation (APC) superfamily. Cationic amino acid transporter (CAT) (TC 2.A.3.3) family.

Its subcellular location is the membrane. Its function is as follows. Involved in the transport of the cationic amino acids (arginine, lysine and ornithine). This Homo sapiens (Human) protein is Cationic amino acid transporter 4 (SLC7A4).